The following is a 282-amino-acid chain: Ribosome-inactivating protein bryodin II (282 aa).

The signal sequence occupies residues 1 to 21 (MRSIGFYSVLALYVGAHVTED). Asn-25 is a glycosylation site (N-linked (GlcNAc...) asparagine). Glu-183 is an active-site residue.

The protein belongs to the ribosome-inactivating protein family. Type 1 RIP subfamily.

The enzyme catalyses Endohydrolysis of the N-glycosidic bond at one specific adenosine on the 28S rRNA.. In terms of biological role, ribosome-inactivating protein of type 1, inhibits protein synthesis in animal cells. The sequence is that of Ribosome-inactivating protein bryodin II from Bryonia dioica (Red bryony).